Reading from the N-terminus, the 283-residue chain is Phosphate import ATP-binding protein PstB (283 aa).

The segment covering 1-20 (MAQTLAQTKQISQSHTFDVS) has biased composition (polar residues). Residues 1–32 (MAQTLAQTKQISQSHTFDVSQSHHKTPDDTNS) form a disordered region. Residues 37–278 (YSTQNLDLWY…PSNKKTEDYI (242 aa)) enclose the ABC transporter domain. An ATP-binding site is contributed by 69 to 76 (GPSGCGKS).

It belongs to the ABC transporter superfamily. Phosphate importer (TC 3.A.1.7) family. As to quaternary structure, the complex is composed of two ATP-binding proteins (PstB), two transmembrane proteins (PstC and PstA) and a solute-binding protein (PstS).

The protein resides in the cell membrane. It carries out the reaction phosphate(out) + ATP + H2O = ADP + 2 phosphate(in) + H(+). In terms of biological role, part of the ABC transporter complex PstSACB involved in phosphate import. Responsible for energy coupling to the transport system. This Staphylococcus aureus (strain MRSA252) protein is Phosphate import ATP-binding protein PstB.